The chain runs to 232 residues: Large ribosomal subunit protein uL1 (232 aa).

Belongs to the universal ribosomal protein uL1 family. In terms of assembly, part of the 50S ribosomal subunit.

Functionally, binds directly to 23S rRNA. The L1 stalk is quite mobile in the ribosome, and is involved in E site tRNA release. Protein L1 is also a translational repressor protein, it controls the translation of the L11 operon by binding to its mRNA. This Liberibacter asiaticus (Citrus greening disease) protein is Large ribosomal subunit protein uL1.